Consider the following 583-residue polypeptide: Orphan steroid hormone receptor 2 (583 aa).

The segment at residues 84–159 (IELCAVCGDK…MGMKSDSVQC (76 aa)) is a DNA-binding region (nuclear receptor). 2 NR C4-type zinc fingers span residues 87 to 107 (CAVCGDKASGRHYGAISCEGC) and 123 to 142 (CRGNKDCQIIKHNRNRCQYC). Residues 248–563 (TLASVVTSLA…SIIPYILRME (316 aa)) enclose the NR LBD domain.

Belongs to the nuclear hormone receptor family. NR2 subfamily. As to quaternary structure, binds DNA as a monomer. Expressed uniformly in the early embryo. In contrast, larval expression is localized to the epaulettes and mouth epithelium. Expressed in multiple adult organs including lantern muscle, tubefeet, intestine, coelomocytes and gonads. In the adult ovaries and testes, expression is specifically localized to the smooth muscle epithelial layer of cells which surround the ovarioles and acini, respectively (at protein level).

The protein resides in the cytoplasm. It is found in the nucleus. In terms of biological role, orphan nuclear receptor. Binds to the hormone response element in the upstream promoter region of the CYIIIB gene in vitro. Both isoform 1 and isoform 2 bind DNA. This Strongylocentrotus purpuratus (Purple sea urchin) protein is Orphan steroid hormone receptor 2.